The primary structure comprises 376 residues: Salivary hyaluronidase (376 aa).

The first 16 residues, 1–16 (MNWIFHLFCAVYGIFC), serve as a signal peptide directing secretion. 2 disulfides stabilise this stretch: Cys32–Cys328 and Cys203–Cys217. N-linked (GlcNAc...) asparagine glycosylation is found at Asn36, Asn55, Asn77, and Asn88. The Proton donor role is filled by Glu118. Residues Asn143, Asn153, Asn181, Asn214, Asn226, Asn248, Asn287, Asn321, Asn336, Asn356, and Asn371 are each glycosylated (N-linked (GlcNAc...) asparagine).

The protein belongs to the glycosyl hydrolase 56 family. Glycosylated; glycosylation is critical for enzymatic activity. In terms of tissue distribution, female salivary gland (at protein level).

It localises to the secreted. The enzyme catalyses Random hydrolysis of (1-&gt;4)-linkages between N-acetyl-beta-D-glucosamine and D-glucuronate residues in hyaluronate.. In terms of biological role, hydrolyzes high molecular weight hyaluronic acid to produce small oligosaccharides. Up-regulates expression of CSF2, CSF3, LIF, CXCL1, CXCL2 and CXCL8 in cultured human dermal microvascular endothelial cells. Promotes host neutrophil recruitment at the injection site. Functionally, (Microbial infection) Probably promotes Leishmania major infection in the host. The sequence is that of Salivary hyaluronidase from Lutzomyia longipalpis (Sand fly).